A 163-amino-acid chain; its full sequence is MYCPFCRHPDSRVVDSRVSDDGSSIRRRRQCPQCERRFTTVETTSLTVIKRSGIGEPFSRGKVINGVRKACQGRPVSEDDLAVLAQEVEENIRASGAAEIEAHEVGLAILGPLQKLDKIAYLRFASVYQAFESLDDFEHAIEILRHEADLDGSAESAKKQVRP.

Residues 3-34 (CPFCRHPDSRVVDSRVSDDGSSIRRRRQCPQC) fold into a zinc finger. Residues 46-136 (LTVIKRSGIG…VYQAFESLDD (91 aa)) form the ATP-cone domain.

Belongs to the NrdR family. Zn(2+) is required as a cofactor.

In terms of biological role, negatively regulates transcription of bacterial ribonucleotide reductase nrd genes and operons by binding to NrdR-boxes. This chain is Transcriptional repressor NrdR, found in Renibacterium salmoninarum (strain ATCC 33209 / DSM 20767 / JCM 11484 / NBRC 15589 / NCIMB 2235).